We begin with the raw amino-acid sequence, 320 residues long: Protein MRH1 (320 aa).

The Extracellular portion of the chain corresponds to 1–34 (MSTFETLIKRGGNEAIKINPPTGADFHITSRGSD). The chain crosses the membrane as a helical span at residues 35-55 (WFWTCFCCYLLFGLILTFLMF). The Cytoplasmic portion of the chain corresponds to 56 to 62 (RKPVNDR). Residues 63–83 (FFYLTGIAPNFFMCIAYFTMA) form a helical membrane-spanning segment. Residues 84 to 116 (SNLGWIPVKAKYNHVQTSTQKEHPGYRQIFYSR) lie on the Extracellular side of the membrane. A helical membrane pass occupies residues 117–137 (FVGWFLALPWPIIQICMLAGT). Over 138-141 (PFWQ) the chain is Cytoplasmic. Residues 142-162 (MAFNVCITEFFTVCWLIAACV) form a helical membrane-spanning segment. At 163–167 (HSTYK) the chain is on the extracellular side. A helical transmembrane segment spans residues 168–188 (WGYYTIGLGAAIVVSISVMTT). Topologically, residues 189–204 (SYNLVKQRDNDIRLTF) are cytoplasmic. A helical transmembrane segment spans residues 205-225 (LVFFSIIMFLWIIAYPTCFGI). Residues 226–238 (TDGGNVLQPDSAG) lie on the Extracellular side of the membrane. Residues 239–259 (IFYGIIDLILMCFIPTLLVPI) form a helical membrane-spanning segment. The Cytoplasmic segment spans residues 260–320 (ANHFGADKLG…KSKKSKKSEE (61 aa)). The disordered stretch occupies residues 285 to 320 (APVASPRPAATPNLSKDKKKKSKKSKKSKKSKKSEE). S289 bears the Phosphoserine mark. The residue at position 295 (T295) is a Phosphothreonine. S299 carries the phosphoserine modification. Basic residues predominate over residues 301–320 (DKKKKSKKSKKSKKSKKSEE).

The protein belongs to the archaeal/bacterial/fungal opsin family.

The protein resides in the cell membrane. It is found in the mitochondrion. It localises to the bud. The protein is Protein MRH1 (MRH1) of Saccharomyces cerevisiae (strain ATCC 204508 / S288c) (Baker's yeast).